A 221-amino-acid chain; its full sequence is Sentrin-specific protease 8 (221 aa).

Position 1 is an N-acetylmethionine (Met1). Positions 11-174 (SLLRQSDVSL…MYVICNTEAL (164 aa)) are protease. Residues His102 and Asp119 contribute to the active site. Cys163 (nucleophile) is an active-site residue.

It belongs to the peptidase C48 family.

Protease that catalyzes two essential functions in the NEDD8 pathway: processing of full-length NEDD8 to its mature form and deconjugation of NEDD8 from targeted proteins such as cullins or p53. The chain is Sentrin-specific protease 8 (Senp8) from Mus musculus (Mouse).